A 128-amino-acid chain; its full sequence is Large ribosomal subunit protein bL20 (128 aa).

This sequence belongs to the bacterial ribosomal protein bL20 family.

Binds directly to 23S ribosomal RNA and is necessary for the in vitro assembly process of the 50S ribosomal subunit. It is not involved in the protein synthesizing functions of that subunit. The chain is Large ribosomal subunit protein bL20 from Anaplasma marginale (strain Florida).